We begin with the raw amino-acid sequence, 210 residues long: Probable GTP-binding protein EngB (210 aa).

Residues 30–204 (QGYEVAFAGR…YKVLAGWMEL (175 aa)) enclose the EngB-type G domain. GTP is bound by residues 38–45 (GRSNAGKS), 64–68 (GRTQL), 82–85 (DLPG), 149–152 (TKAD), and 182–185 (LFSA). 2 residues coordinate Mg(2+): Ser45 and Thr66.

This sequence belongs to the TRAFAC class TrmE-Era-EngA-EngB-Septin-like GTPase superfamily. EngB GTPase family. Mg(2+) is required as a cofactor.

Functionally, necessary for normal cell division and for the maintenance of normal septation. The protein is Probable GTP-binding protein EngB of Pseudomonas putida (strain W619).